The chain runs to 396 residues: Elongation factor Tu (396 aa).

A tr-type G domain is found at 10–206 (KPHVNVGTIG…TLDEYIPEPE (197 aa)). The tract at residues 19 to 26 (GHVDHGKT) is G1. GTP is bound at residue 19 to 26 (GHVDHGKT). Thr-26 serves as a coordination point for Mg(2+). Residues 60-64 (GITIA) are G2. Residues 81–84 (DCPG) form a G3 region. GTP-binding positions include 81 to 85 (DCPGH) and 136 to 139 (NKAD). The segment at 136-139 (NKAD) is G4. The interval 174–176 (SAL) is G5.

Belongs to the TRAFAC class translation factor GTPase superfamily. Classic translation factor GTPase family. EF-Tu/EF-1A subfamily. Monomer.

The protein resides in the cytoplasm. The enzyme catalyses GTP + H2O = GDP + phosphate + H(+). Its function is as follows. GTP hydrolase that promotes the GTP-dependent binding of aminoacyl-tRNA to the A-site of ribosomes during protein biosynthesis. The chain is Elongation factor Tu from Alcanivorax borkumensis (strain ATCC 700651 / DSM 11573 / NCIMB 13689 / SK2).